Reading from the N-terminus, the 710-residue chain is Dendrin (710 aa).

Disordered stretches follow at residues 1 to 22 (MLDGPLFSEGPDSPRELQDEES), 62 to 195 (WARG…PWGG), 213 to 274 (AGTA…KRLD), and 324 to 375 (GLNS…GKEG). Positions 103-134 (AEVRAREQEKRKAASQEREAKETERKRRKAGG) form a coiled coil. Residues 105–127 (VRAREQEKRKAASQEREAKETER) are compositionally biased toward basic and acidic residues. A nuclear localization region spans residues 113–131 (RKAASQEREAKETERKRRK). An interaction with MAGI2 region spans residues 186-236 (GVAWAGPWGGRRPGPPSYEAHLLLRGSAGTAPRRRWDRPPPYVAPPSYEGP). A compositionally biased stretch (basic and acidic residues) spans 265 to 274 (EGGRTKKRLD). The interval 341–435 (PGTDAALSRS…LEVWKVTRRA (95 aa)) is interaction with ACTN1. Over residues 360–370 (PRSRQHLRGSR) the composition is skewed to basic residues. S388 bears the Phosphoserine mark. 3 disordered regions span residues 390–422 (KKPPVRHSQTLPRPWAPGGTGWKESLGQREGAE), 469–508 (PRTQQGQLVPSGESCSVSDSLSQPKPCHEEEGEGAAANPS), and 521–710 (NQPS…RERE). The segment at 407 to 708 (GGTGWKESLG…TRKTPQGNRE (302 aa)) is interaction with CD2AP and NPHS1. The span at 469 to 491 (PRTQQGQLVPSGESCSVSDSLSQ) shows a compositional bias: polar residues. A compositionally biased stretch (basic and acidic residues) spans 693-710 (GFIREDTRKTPQGNRERE).

As to quaternary structure, forms a ternary complex with MAGI2 and SH3KBP1; recruits DDN to the cytoplasm. Interacts with MAGI1. Interacts with ACTN1 and may interact with WWC1. Interacts with the podocyte slit diaphragm proteins CD2AP, NPHS1 and NPHS2; the interaction with CD2AP and NPHS1 is direct. In terms of tissue distribution, two forms of 81 kDa and 89 kDa are expressed in brain. The 81 kDa form is the only one found in kidney podocytes.

Its subcellular location is the cell projection. The protein localises to the dendritic spine membrane. The protein resides in the cytoplasm. It localises to the endoplasmic reticulum membrane. It is found in the perikaryon. Its subcellular location is the nucleus. In terms of biological role, promotes apoptosis of kidney glomerular podocytes. Podocytes are highly specialized cells essential to the ultrafiltration of blood, resulting in the extraction of urine and the retention of protein. The sequence is that of Dendrin (Ddn) from Mus musculus (Mouse).